The chain runs to 207 residues: Dephospho-CoA kinase (207 aa).

Residues 10 to 207 form the DPCK domain; it reads ILGLTGGIGS…FYLTLRGGQP (198 aa). Residue 18 to 23 coordinates ATP; sequence GSGKSA.

It belongs to the CoaE family.

It localises to the cytoplasm. It carries out the reaction 3'-dephospho-CoA + ATP = ADP + CoA + H(+). The protein operates within cofactor biosynthesis; coenzyme A biosynthesis; CoA from (R)-pantothenate: step 5/5. Functionally, catalyzes the phosphorylation of the 3'-hydroxyl group of dephosphocoenzyme A to form coenzyme A. The sequence is that of Dephospho-CoA kinase from Pseudomonas putida (Arthrobacter siderocapsulatus).